The chain runs to 432 residues: Amino-acid acetyltransferase (432 aa).

Residues glutamate 286–serine 425 enclose the N-acetyltransferase domain.

This sequence belongs to the acetyltransferase family. ArgA subfamily.

It localises to the cytoplasm. The catalysed reaction is L-glutamate + acetyl-CoA = N-acetyl-L-glutamate + CoA + H(+). The protein operates within amino-acid biosynthesis; L-arginine biosynthesis; N(2)-acetyl-L-ornithine from L-glutamate: step 1/4. This Pseudomonas fluorescens (strain ATCC BAA-477 / NRRL B-23932 / Pf-5) protein is Amino-acid acetyltransferase.